Reading from the N-terminus, the 327-residue chain is Methionine import ATP-binding protein MetN (327 aa).

Positions 3-239 constitute an ABC transporter domain; that stretch reads VELKNIEKIY…PKHAVTKELL (237 aa). Position 36–43 (36–43) interacts with ATP; that stretch reads GYSGAGKS.

The protein belongs to the ABC transporter superfamily. Methionine importer (TC 3.A.1.24) family. In terms of assembly, the complex is composed of two ATP-binding proteins (MetN), two transmembrane proteins (MetI) and a solute-binding protein (MetQ).

The protein localises to the cell inner membrane. It catalyses the reaction L-methionine(out) + ATP + H2O = L-methionine(in) + ADP + phosphate + H(+). The catalysed reaction is D-methionine(out) + ATP + H2O = D-methionine(in) + ADP + phosphate + H(+). Its function is as follows. Part of the ABC transporter complex MetNIQ involved in methionine import. Responsible for energy coupling to the transport system. This Helicobacter pylori (strain ATCC 700392 / 26695) (Campylobacter pylori) protein is Methionine import ATP-binding protein MetN.